A 380-amino-acid chain; its full sequence is Beta-1,3-N-acetylglucosaminyltransferase lunatic fringe (380 aa).

Residues 1-8 (MLKRCGRR) lie on the Cytoplasmic side of the membrane. The helical; Signal-anchor for type II membrane protein transmembrane segment at 9 to 29 (LLLALAGALLACLLVLTADPP) threads the bilayer. Residues 30–380 (PPPVPAERGR…TSWCPRSAIF (351 aa)) lie on the Lumenal side of the membrane. A disordered region spans residues 85–110 (SRRDVGPPPGGAPRPADGPPRPLAEP). The span at 90–107 (GPPPGGAPRPADGPPRPL) shows a compositional bias: pro residues. Arg130 lines the substrate pocket. N-linked (GlcNAc...) asparagine glycosylation is present at Asn168. Intrachain disulfides connect Cys169/Cys180 and Cys198/Cys261. Asp202 contacts substrate. Residue Asp203 participates in Mn(2+) binding. Asp291 is a catalytic residue. His315 is a binding site for Mn(2+). A disulfide bond links Cys365 and Cys374.

Belongs to the glycosyltransferase 31 family. Requires Mn(2+) as cofactor. Co(2+) serves as cofactor. Post-translationally, a soluble form may be derived from the membrane form by proteolytic processing.

It is found in the golgi apparatus. The protein localises to the golgi apparatus membrane. The catalysed reaction is 3-O-(alpha-L-fucosyl)-L-threonyl-[EGF-like domain protein] + UDP-N-acetyl-alpha-D-glucosamine = 3-O-(N-acetyl-beta-D-glucosaminyl-(1-&gt;3)-alpha-L-fucosyl)-L-threonyl-[EGF-like domain protein] + UDP + H(+). The enzyme catalyses 3-O-(alpha-L-fucosyl)-L-seryl-[EGF-like domain protein] + UDP-N-acetyl-alpha-D-glucosamine = 3-O-(N-acetyl-beta-D-glucosaminyl-(1-&gt;3)-alpha-L-fucosyl)-L-seryl-[EGF-like domain protein] + UDP + H(+). Its function is as follows. Glycosyltransferase that initiates the elongation of O-linked fucose residues attached to EGF-like repeats in the extracellular domain of Notch molecules. Modulates NOTCH1 activity by modifying O-fucose residues at specific EGF-like domains resulting in inhibition of NOTCH1 activation by JAG1 and enhancement of NOTCH1 activation by DLL1 via an increase in its binding to DLL1. Decreases the binding of JAG1 to NOTCH2 but not that of DLL1. Essential mediator of somite segmentation and patterning. The protein is Beta-1,3-N-acetylglucosaminyltransferase lunatic fringe (LFNG) of Bos taurus (Bovine).